The sequence spans 366 residues: Small ribosomal subunit biogenesis GTPase RsgA (366 aa).

Positions 107–266 constitute a CP-type G domain; it reads RSEGQILAAN…LIDTPGLRGV (160 aa). Residues 154-157 and 208-216 contribute to the GTP site; these read TKAD and GQSGAGKST. 4 residues coordinate Zn(2+): C289, C294, H296, and C302.

The protein belongs to the TRAFAC class YlqF/YawG GTPase family. RsgA subfamily. Monomer. Associates with 30S ribosomal subunit, binds 16S rRNA. Zn(2+) serves as cofactor.

The protein resides in the cytoplasm. In terms of biological role, one of several proteins that assist in the late maturation steps of the functional core of the 30S ribosomal subunit. Helps release RbfA from mature subunits. May play a role in the assembly of ribosomal proteins into the subunit. Circularly permuted GTPase that catalyzes slow GTP hydrolysis, GTPase activity is stimulated by the 30S ribosomal subunit. The sequence is that of Small ribosomal subunit biogenesis GTPase RsgA from Streptomyces coelicolor (strain ATCC BAA-471 / A3(2) / M145).